The chain runs to 201 residues: Holliday junction branch migration complex subunit RuvA (201 aa).

Residues 1 to 63 (MIGCLIGEVF…EDAQQLYGFI (63 aa)) are domain I. Positions 64-142 (DAQEKLIFRT…ALSVQATTGS (79 aa)) are domain II. The interval 143–152 (TVTSAQIQFS) is flexible linker. The segment at 152 to 201 (SSNSPIAEAEAALQSLGYKPIEAQKAIAAVKADYTEAADLIRAALKSMMK) is domain III.

It belongs to the RuvA family. As to quaternary structure, homotetramer. Forms an RuvA(8)-RuvB(12)-Holliday junction (HJ) complex. HJ DNA is sandwiched between 2 RuvA tetramers; dsDNA enters through RuvA and exits via RuvB. An RuvB hexamer assembles on each DNA strand where it exits the tetramer. Each RuvB hexamer is contacted by two RuvA subunits (via domain III) on 2 adjacent RuvB subunits; this complex drives branch migration. In the full resolvosome a probable DNA-RuvA(4)-RuvB(12)-RuvC(2) complex forms which resolves the HJ.

Its subcellular location is the cytoplasm. In terms of biological role, the RuvA-RuvB-RuvC complex processes Holliday junction (HJ) DNA during genetic recombination and DNA repair, while the RuvA-RuvB complex plays an important role in the rescue of blocked DNA replication forks via replication fork reversal (RFR). RuvA specifically binds to HJ cruciform DNA, conferring on it an open structure. The RuvB hexamer acts as an ATP-dependent pump, pulling dsDNA into and through the RuvAB complex. HJ branch migration allows RuvC to scan DNA until it finds its consensus sequence, where it cleaves and resolves the cruciform DNA. The protein is Holliday junction branch migration complex subunit RuvA of Acinetobacter baylyi (strain ATCC 33305 / BD413 / ADP1).